Here is a 106-residue protein sequence, read N- to C-terminus: uncharacterized protein (106 aa).

It is found in the mitochondrion. This is an uncharacterized protein from Arabidopsis thaliana (Mouse-ear cress).